A 64-amino-acid chain; its full sequence is Large ribosomal subunit protein bL35 (64 aa).

Belongs to the bacterial ribosomal protein bL35 family.

The protein is Large ribosomal subunit protein bL35 of Shewanella putrefaciens (strain CN-32 / ATCC BAA-453).